Consider the following 213-residue polypeptide: Imidazole glycerol phosphate synthase subunit HisH (213 aa).

The Glutamine amidotransferase type-1 domain maps to 4–213 (SIAIVDYGMG…LYRNFVHWNP (210 aa)). Residue Cys-83 is the Nucleophile of the active site. Active-site residues include His-193 and Glu-195.

As to quaternary structure, heterodimer of HisH and HisF.

It localises to the cytoplasm. It catalyses the reaction 5-[(5-phospho-1-deoxy-D-ribulos-1-ylimino)methylamino]-1-(5-phospho-beta-D-ribosyl)imidazole-4-carboxamide + L-glutamine = D-erythro-1-(imidazol-4-yl)glycerol 3-phosphate + 5-amino-1-(5-phospho-beta-D-ribosyl)imidazole-4-carboxamide + L-glutamate + H(+). It carries out the reaction L-glutamine + H2O = L-glutamate + NH4(+). Its pathway is amino-acid biosynthesis; L-histidine biosynthesis; L-histidine from 5-phospho-alpha-D-ribose 1-diphosphate: step 5/9. Functionally, IGPS catalyzes the conversion of PRFAR and glutamine to IGP, AICAR and glutamate. The HisH subunit catalyzes the hydrolysis of glutamine to glutamate and ammonia as part of the synthesis of IGP and AICAR. The resulting ammonia molecule is channeled to the active site of HisF. The polypeptide is Imidazole glycerol phosphate synthase subunit HisH (Burkholderia pseudomallei (strain K96243)).